The following is a 401-amino-acid chain: F-box protein At1g69090 (401 aa).

The segment at 1-23 (MASPTLALAQSPPPKSPAVSVSQ) is disordered. The 48-residue stretch at 27-74 (HCWSKLPLDLMQLVFERLAFLDFERAKSVCSSWQFGSKQSKPNNQIPW) folds into the F-box domain.

The sequence is that of F-box protein At1g69090 from Arabidopsis thaliana (Mouse-ear cress).